The sequence spans 278 residues: Elongation factor Ts (278 aa).

Residues 79–82 are involved in Mg(2+) ion dislocation from EF-Tu; that stretch reads TDFV.

This sequence belongs to the EF-Ts family.

The protein resides in the cytoplasm. In terms of biological role, associates with the EF-Tu.GDP complex and induces the exchange of GDP to GTP. It remains bound to the aminoacyl-tRNA.EF-Tu.GTP complex up to the GTP hydrolysis stage on the ribosome. This Borrelia recurrentis (strain A1) protein is Elongation factor Ts.